We begin with the raw amino-acid sequence, 512 residues long: Tyrosine decarboxylase (512 aa).

L-tyrosine-binding residues include proline 100, histidine 205, and histidine 320. An N6-(pyridoxal phosphate)lysine modification is found at lysine 321. Tyrosine 350 provides a ligand contact to L-tyrosine.

The protein belongs to the group II decarboxylase family. As to quaternary structure, homodimer. Requires pyridoxal 5'-phosphate as cofactor. In terms of tissue distribution, mainly expressed in roots, stems and capsule walls.

It carries out the reaction L-tyrosine + H(+) = tyramine + CO2. Tyrosine decarboxylase that converts tyrosine into tyramine, a precursor of isoquinoline alkaloids and various amides. The protein is Tyrosine decarboxylase of Papaver somniferum (Opium poppy).